A 125-amino-acid chain; its full sequence is Large ribosomal subunit protein bL12 (125 aa).

The protein belongs to the bacterial ribosomal protein bL12 family. Homodimer. Part of the ribosomal stalk of the 50S ribosomal subunit. Forms a multimeric L10(L12)X complex, where L10 forms an elongated spine to which 2 to 4 L12 dimers bind in a sequential fashion. Binds GTP-bound translation factors.

In terms of biological role, forms part of the ribosomal stalk which helps the ribosome interact with GTP-bound translation factors. Is thus essential for accurate translation. This chain is Large ribosomal subunit protein bL12, found in Rickettsia typhi (strain ATCC VR-144 / Wilmington).